We begin with the raw amino-acid sequence, 396 residues long: Elongation factor Tu (396 aa).

Residues 10–205 (KPHVNIGTIG…AVDESIPAPV (196 aa)) enclose the tr-type G domain. The segment at 19-26 (GHVDHGKT) is G1. 19–26 (GHVDHGKT) contributes to the GTP binding site. Mg(2+) is bound at residue threonine 26. The segment at 62-66 (GITIN) is G2. Positions 83–86 (DAPG) are G3. Residues 83-87 (DAPGH) and 138-141 (NKSD) each bind GTP. The G4 stretch occupies residues 138–141 (NKSD). Positions 175–177 (SAL) are G5.

It belongs to the TRAFAC class translation factor GTPase superfamily. Classic translation factor GTPase family. EF-Tu/EF-1A subfamily. As to quaternary structure, monomer.

It is found in the cytoplasm. The enzyme catalyses GTP + H2O = GDP + phosphate + H(+). Its function is as follows. GTP hydrolase that promotes the GTP-dependent binding of aminoacyl-tRNA to the A-site of ribosomes during protein biosynthesis. This is Elongation factor Tu from Mycobacterium leprae (strain Br4923).